The following is a 272-amino-acid chain: Potassium channel regulatory protein (272 aa).

Positions 5-106 constitute a BTB domain; it reads ELVTLNVGGK…LLNPYLLQPR (102 aa).

Can form homooligomers. Interacts with KCNA1 (via cytoplasmic N-terminal domain) and KCNA4. As to expression, ubiquitous in normal tissues and expressed in some tumor tissues.

The protein localises to the endoplasmic reticulum. In terms of biological role, inhibits potassium fluxes in cells. May regulate Kv1 family channel proteins by retaining a fraction of channels in endomembranes. The sequence is that of Potassium channel regulatory protein (KCNRG) from Homo sapiens (Human).